Here is a 597-residue protein sequence, read N- to C-terminus: UvrABC system protein C (597 aa).

The GIY-YIG domain maps to Lys-14–Leu-91.

Belongs to the UvrC family. As to quaternary structure, interacts with UvrB in an incision complex.

It localises to the cytoplasm. Functionally, the UvrABC repair system catalyzes the recognition and processing of DNA lesions. UvrC both incises the 5' and 3' sides of the lesion. The N-terminal half is responsible for the 3' incision and the C-terminal half is responsible for the 5' incision. This chain is UvrABC system protein C, found in Mycoplasma genitalium (strain ATCC 33530 / DSM 19775 / NCTC 10195 / G37) (Mycoplasmoides genitalium).